Reading from the N-terminus, the 407-residue chain is Formamidase (407 aa).

In terms of assembly, homotrimer.

The catalysed reaction is formamide + H2O = formate + NH4(+). Functionally, hydrolyzes formamide with the production of ammonia which can be used as a source of nitrogen for growth. Also acts, more slowly, on acetamide, propanamide and butanamide. This is Formamidase (fmdA) from Methylophilus methylotrophus (Bacterium W3A1).